Here is an 88-residue protein sequence, read N- to C-terminus: Small ribosomal subunit protein uS19 (88 aa).

It belongs to the universal ribosomal protein uS19 family.

Functionally, protein S19 forms a complex with S13 that binds strongly to the 16S ribosomal RNA. The sequence is that of Small ribosomal subunit protein uS19 from Chlamydia felis (strain Fe/C-56) (Chlamydophila felis).